We begin with the raw amino-acid sequence, 162 residues long: Phosphopantetheine adenylyltransferase (162 aa).

Residue Ser9 coordinates substrate. ATP contacts are provided by residues 9-10 and His17; that span reads SF. Residues Lys41, Thr73, and Arg87 each contribute to the substrate site. Residues 88–90, Glu98, and 123–129 contribute to the ATP site; these read GLR and YSFISSS.

This sequence belongs to the bacterial CoaD family. As to quaternary structure, homohexamer. Mg(2+) serves as cofactor.

It localises to the cytoplasm. The enzyme catalyses (R)-4'-phosphopantetheine + ATP + H(+) = 3'-dephospho-CoA + diphosphate. It participates in cofactor biosynthesis; coenzyme A biosynthesis; CoA from (R)-pantothenate: step 4/5. In terms of biological role, reversibly transfers an adenylyl group from ATP to 4'-phosphopantetheine, yielding dephospho-CoA (dPCoA) and pyrophosphate. This chain is Phosphopantetheine adenylyltransferase, found in Carboxydothermus hydrogenoformans (strain ATCC BAA-161 / DSM 6008 / Z-2901).